Consider the following 316-residue polypeptide: HPr kinase/phosphorylase (316 aa).

Catalysis depends on residues His-143 and Lys-164. Residue 158–165 coordinates ATP; it reads GEAGSGKS. Ser-165 contributes to the Mg(2+) binding site. The active-site Proton acceptor; for phosphorylation activity. Proton donor; for dephosphorylation activity is Asp-182. Residues 206–215 are important for the catalytic mechanism of both phosphorylation and dephosphorylation; it reads LEVRGLGVLN. Glu-207 is a Mg(2+) binding site. Residue Arg-251 is part of the active site. The tract at residues 272–277 is important for the catalytic mechanism of dephosphorylation; it reads PVMPGR.

This sequence belongs to the HPrK/P family. In terms of assembly, homohexamer. Mg(2+) serves as cofactor.

The catalysed reaction is [HPr protein]-L-serine + ATP = [HPr protein]-O-phospho-L-serine + ADP + H(+). It catalyses the reaction [HPr protein]-O-phospho-L-serine + phosphate + H(+) = [HPr protein]-L-serine + diphosphate. Functionally, catalyzes the ATP- as well as the pyrophosphate-dependent phosphorylation of a specific serine residue in HPr, a phosphocarrier protein of the phosphoenolpyruvate-dependent sugar phosphotransferase system (PTS). HprK/P also catalyzes the pyrophosphate-producing, inorganic phosphate-dependent dephosphorylation (phosphorolysis) of seryl-phosphorylated HPr (P-Ser-HPr). The polypeptide is HPr kinase/phosphorylase (Xanthomonas campestris pv. campestris (strain 8004)).